We begin with the raw amino-acid sequence, 382 residues long: MSTSAPLLSRYRQLSPAASIRVSPLCLGAMTFGVSDGEMFGECSKEMAFAILDHFYQQGGNFIDTANGYRAGESEMWLGEWMASRKNRDDIVLATKYAAGYRGHEKNRIQVNYGGTGTKSMRLSVDASLQKLQTSYIDLLYVHWWDYTVSIPELMHALNDLVASGKVHYLGISDSPAWVVSKANQYARDHGLRQFVVYQGLWNAAKRDLERDILPMCLDEGMGLCPYGVLNQGRFRTEEGFRDRDQTNNAGGRNIIPLSEHDRSVSRVLDIVATSKGVPLLQVALAYVMQKAPYVFPIVGVRKVDHLTGVEPAVHISLTDEEVNAIENAYEFDPGFPHTFLSGSMFAQGPPKGGYSPDVVWWTKMLGTFDWVEGAKPIRPQP.

D64 is an NADP(+) binding site. Y69 functions as the Proton donor in the catalytic mechanism. H143 contributes to the substrate binding site. Residues 173–174, Q199, 228–238, and 302–310 each bind NADP(+); these read SD, GVLNQGRFRTE, and RKVDHLTGV.

Belongs to the aldo/keto reductase family. Aldo/keto reductase 2 subfamily.

The protein operates within mycotoxin biosynthesis; aflatoxin biosynthesis. In terms of biological role, norsolorinic acid reductase; part of the gene cluster that mediates the biosynthesis of aflatoxins, a group of polyketide-derived furanocoumarins, and part of the most toxic and carcinogenic compounds among the known mycotoxins. The four major aflatoxins produced by A.parasiticus are aflatoxin B1 (AFB1), aflatoxin B2 (AFB2), aflatoxin G1 (AFG1) and aflatoxin G2 (AFG2). Within the aflatoxin pathway, the norsolorinic acid reductase aflE may play a role in the conversion of norsolorinic acid (NOR) to averantin (AVN). The biosynthesis of aflatoxins begins with the norsolorinic acid synthase aflC that combines a hexanoyl starter unit produced by the fatty acid synthase aflA/aflB and 7 malonyl-CoA extender units to synthesize the precursor NOR. The second step is the conversion of NOR to averantin and requires the norsolorinic acid ketoreductase aflD, which catalyzes the dehydration of norsolorinic acid to form (1'S)-averantin. The norsolorinic acid reductases aflE and aflF may also play a role in the conversion of NOR to AVN. The cytochrome P450 monooxygenase aflG then catalyzes the hydroxylation of AVN to 5'hydroxyaverantin (HAVN). The next step is performed by the 5'-hydroxyaverantin dehydrogenase aflH that transforms HAVN to 5'-oxoaverantin (OAVN) which is further converted to averufin (AVF) by aflK that plays a dual role in the pathway, as a 5'-oxoaverantin cyclase that mediates conversion of 5'-oxoaverantin, as well as a versicolorin B synthase in a later step in the pathway. The averufin oxidase aflI catalyzes the conversion of AVF to versiconal hemiacetal acetate (VHA). VHA is then the substrate for the versiconal hemiacetal acetate esterase aflJ to yield versiconal (VAL). Versicolorin B synthase aflK then converts VAL to versicolorin B (VERB) by closing the bisfuran ring of aflatoxin which is required for DNA-binding, thus giving to aflatoxin its activity as a mutagen. Then, the activity of the versicolorin B desaturase aflL leads to versicolorin A (VERA). A branch point starts from VERB since it can also be converted to dihydrodemethylsterigmatocystin (DMDHST), probably also by aflL, VERA being a precursor for aflatoxins B1 and G1, and DMDHST for aflatoxins B2 and G2. Next, the versicolorin reductase aflM and the cytochrome P450 monooxygenase aflN are involved in conversion of VERA to demethylsterigmatocystin (DMST). AflX and aflY seem also involved in this step, through probable aflX-mediated epoxide ring-opening step following versicolorin A oxidation and aflY-mediated Baeyer-Villiger oxidation required for the formation of the xanthone ring. The methyltransferase aflO then leads to the modification of DMST to sterigmatocystin (ST), and of DMDHST to dihydrosterigmatocystin (DHST). Both ST and DHST are then substrates of the O-methyltransferase aflP to yield O-methylsterigmatocystin (OMST) and dihydro-O-methylsterigmatocystin (DHOMST), respectively. Finally OMST is converted to aflatoxins B1 and G1, and DHOMST to aflatoxins B2 and G2, via the action of several enzymes including O-methylsterigmatocystin oxidoreductase aflQ, the cytochrome P450 monooxygenase aflU, but also the NADH-dependent flavin oxidoreductase nadA which is specifically required for the synthesis of AFG1. The polypeptide is Norsolorinic acid reductase B (Aspergillus parasiticus (strain ATCC 56775 / NRRL 5862 / SRRC 143 / SU-1)).